The sequence spans 344 residues: Protein pelota homolog (344 aa).

It belongs to the eukaryotic release factor 1 family. Pelota subfamily. In terms of assembly, monomer. The cofactor is a divalent metal cation.

Its subcellular location is the cytoplasm. Functionally, may function in recognizing stalled ribosomes, interact with stem-loop structures in stalled mRNA molecules, and effect endonucleolytic cleavage of the mRNA. May play a role in the release non-functional ribosomes and degradation of damaged mRNAs. Has endoribonuclease activity. The polypeptide is Protein pelota homolog (Saccharolobus islandicus (strain M.16.27) (Sulfolobus islandicus)).